An 856-amino-acid polypeptide reads, in one-letter code: Translation initiation factor IF-2 (856 aa).

Disordered stretches follow at residues 1 to 248 (MSDN…ARAR) and 254 to 273 (KRAR…QQKQ). The segment covering 22-38 (ETGQVKQSFSHGRSNTV) has biased composition (polar residues). Over residues 83–93 (APRPAPAPIPT) the composition is skewed to pro residues. The segment covering 100-150 (LERREQQERLLREAEEARMAALEETRRREERAKAEATEEERRRAEENRRAE) has biased composition (basic and acidic residues). Positions 156-196 (AAAAAAAAATAEAETAAAAPREEAPAAAGTAEEAPRTSSST) are enriched in low complexity. Over residues 197 to 209 (MPPPRRFTPVPSP) the composition is skewed to pro residues. The segment covering 210–229 (KRPEPPRPQQRDRKGDDRRQ) has biased composition (basic and acidic residues). Residues 356-526 (PRPPVVTIMG…ELQAELLELK (171 aa)) form the tr-type G domain. The tract at residues 365–372 (GHVDHGKT) is G1. Residue 365–372 (GHVDHGKT) coordinates GTP. A G2 region spans residues 390–394 (GITQH). Positions 412–415 (DTPG) are G3. Residues 412-416 (DTPGH) and 466-469 (NKMD) each bind GTP. A G4 region spans residues 466-469 (NKMD). Positions 502 to 504 (SAL) are G5.

It belongs to the TRAFAC class translation factor GTPase superfamily. Classic translation factor GTPase family. IF-2 subfamily.

It is found in the cytoplasm. Functionally, one of the essential components for the initiation of protein synthesis. Protects formylmethionyl-tRNA from spontaneous hydrolysis and promotes its binding to the 30S ribosomal subunits. Also involved in the hydrolysis of GTP during the formation of the 70S ribosomal complex. This chain is Translation initiation factor IF-2, found in Rhizorhabdus wittichii (strain DSM 6014 / CCUG 31198 / JCM 15750 / NBRC 105917 / EY 4224 / RW1) (Sphingomonas wittichii).